The chain runs to 343 residues: Signaling lymphocytic activation molecule (343 aa).

Residues 1 to 24 form the signal peptide; it reads MDPKGSLSWRILLFLSLAFELSYG. Over 25 to 242 the chain is Extracellular; sequence TGGGVMDCPV…KQESSSESSP (218 aa). The region spanning 29 to 138 is the Ig-like V-type domain; the sequence is VMDCPVILQK…VQQFCKQLKL (110 aa). N-linked (GlcNAc...) asparagine glycosylation is found at Asn54, Asn58, Asn103, Asn126, Asn151, Asn158, Asn192, Asn211, and Asn226. In terms of domain architecture, Ig-like C2-type spans 145–228; sequence PEIKVLNKTQ…SSISRTFNLS (84 aa). Intrachain disulfides connect Cys161/Cys232 and Cys167/Cys212. Residues 243–265 form a helical membrane-spanning segment; sequence WMQYTLVPLGVVIIFILVFTAII. Over 266–343 the chain is Cytoplasmic; it reads MMKRQGKSNH…VYASVTLPES (78 aa). The ITSM 1 motif lies at 286–291; that stretch reads TIYAQV. Phosphotyrosine; by FYN occurs at positions 288, 315, and 335. The SH2-binding signature appears at 313-318; sequence TIYVAA. The segment at 320–343 is disordered; it reads EPAPESVQEPNPTTVYASVTLPES. The segment covering 327–343 has biased composition (polar residues); that stretch reads QEPNPTTVYASVTLPES. An ITSM 2 motif is present at residues 333 to 338; it reads TVYASV.

In terms of assembly, interacts (via cytoplasmic domain) with SH2D1A and SH2D1B; SH2D1A mediates association with FYN; SH2D1A binds to phosphorylated and not phosphorylated ITSM 1. Interacts (via cytoplasmic domain phosphorylated on tyrosine residues) with INPP5D and PTPN11; presence of SH2D1A facilitates binding to INPP5D. Interacts with MAP4K1. Interacts with PIK3C3, BECN1 and UVRAG; indicative for an association with PI3K complex II (PI3KC3-C2). Post-translationally, phosphorylated on tyrosine residues by FYN.

It localises to the cell membrane. Self-ligand receptor of the signaling lymphocytic activation molecule (SLAM) family. SLAM receptors triggered by homo- or heterotypic cell-cell interactions are modulating the activation and differentiation of a wide variety of immune cells and thus are involved in the regulation and interconnection of both innate and adaptive immune response. Activities are controlled by presence or absence of small cytoplasmic adapter proteins, SH2D1A/SAP and/or SH2D1B/EAT-2. SLAMF1-induced signal-transduction events in T-lymphocytes are different from those in B-cells. Two modes of SLAMF1 signaling seem to exist: one depending on SH2D1A (and perhaps SH2D1B) and another in which protein-tyrosine phosphatase 2C (PTPN11)-dependent signal transduction operates. Initially it has been proposed that association with SH2D1A prevents binding to inhibitory effectors including INPP5D/SHIP1 and PTPN11/SHP-2. However, signaling is also regulated by SH2D1A which can simultaneously interact with and recruit FYN which subsequently phosphorylates and activates SLAMF1. Mediates IL-2-independent proliferation of activated T-cells during immune responses and induces IFN-gamma production. Downstreaming signaling involves INPP5D, DOK1 and DOK2 leading to inhibited IFN-gamma production in T-cells, and PRKCQ, BCL10 and NFKB1 leading to increased T-cell activation and Th2 cytokine production. Promotes T-cell receptor-induced IL-4 secretion by CD4(+) cells. Inhibits antigen receptor-mediated production of IFN-gamma, but not IL-2, in CD4(-)/CD8(-) T-cells. Required for IL-4 production by germinal centers T follicular helper (T(Fh))cells. May inhibit CD40-induced signal transduction in monocyte-derived dendritic cells. May play a role in allergic responses and may regulate allergen-induced Th2 cytokine and Th1 cytokine secretion. In conjunction with SLAMF6 controls the transition between positive selection and the subsequent expansion and differentiation of the thymocytic natural killer T (NKT) cell lineage. Involved in the peripheral differentiation of indifferent natural killer T (iNKT) cells toward a regulatory NKT2 type. In macrophages involved in down-regulation of IL-12, TNF-alpha and nitric oxide in response to lipopolysaccharide (LPS). In B-cells activates the ERK signaling pathway independently of SH2D1A but implicating both, SYK and INPP5D, and activates Akt signaling dependent on SYK and SH2D1A. In conjunction with CD84/SLAMF5 and SLAMF6 may be a negative regulator of the humoral immune response. In terms of biological role, (Microbial infection) Involved in innate immune response against Gram-negative bacteria in macrophages; probably recognizes OmpC and/or OmpF on the bacterial surface, regulates phagosome maturation and recruitment of the PI3K complex II (PI3KC3-C2) leading to accumulated of PdtIns(3)P and NOX2 activity in the phagosomes. In Mus musculus (Mouse), this protein is Signaling lymphocytic activation molecule (Slamf1).